Here is a 611-residue protein sequence, read N- to C-terminus: tRNA uridine 5-carboxymethylaminomethyl modification enzyme MnmG (611 aa).

FAD is bound at residue 14 to 19 (GAGHAG). 274–288 (GPRYCPSIEDKIVKF) provides a ligand contact to NAD(+).

This sequence belongs to the MnmG family. Homodimer. Heterotetramer of two MnmE and two MnmG subunits. FAD is required as a cofactor.

The protein localises to the cytoplasm. NAD-binding protein involved in the addition of a carboxymethylaminomethyl (cmnm) group at the wobble position (U34) of certain tRNAs, forming tRNA-cmnm(5)s(2)U34. This Chlamydia abortus (strain DSM 27085 / S26/3) (Chlamydophila abortus) protein is tRNA uridine 5-carboxymethylaminomethyl modification enzyme MnmG.